We begin with the raw amino-acid sequence, 286 residues long: UPF0725 protein At2g20620 (286 aa).

The segment at 1-49 (MVLETPVCSPIDKESSSDDVQLNKPPKKKRKLDVVYPPRDNTSSSSDVK) is disordered.

Belongs to the UPF0725 (EMB2204) family.

The sequence is that of UPF0725 protein At2g20620 from Arabidopsis thaliana (Mouse-ear cress).